A 490-amino-acid polypeptide reads, in one-letter code: ATP synthase subunit beta, chloroplastic (490 aa).

170 to 177 (GGXGVGKT) provides a ligand contact to ATP.

Belongs to the ATPase alpha/beta chains family. F-type ATPases have 2 components, CF(1) - the catalytic core - and CF(0) - the membrane proton channel. CF(1) has five subunits: alpha(3), beta(3), gamma(1), delta(1), epsilon(1). CF(0) has four main subunits: a(1), b(1), b'(1) and c(9-12).

It localises to the plastid. The protein localises to the chloroplast thylakoid membrane. It catalyses the reaction ATP + H2O + 4 H(+)(in) = ADP + phosphate + 5 H(+)(out). In terms of biological role, produces ATP from ADP in the presence of a proton gradient across the membrane. The catalytic sites are hosted primarily by the beta subunits. This chain is ATP synthase subunit beta, chloroplastic, found in Ipomoea coccinea (Scarlet morning-glory).